The following is a 756-amino-acid chain: Centromere protein I (756 aa).

The interval 1-60 (MSPQKRVKNVQAQNRTSQGSSSFQTTLSAWKVKQDPSNSKNISKHGQNNPVGDYEHADDQ) is disordered. Polar residues-rich tracts occupy residues 10-28 (VQAQ…TTLS) and 35-50 (DPSN…QNNP).

Belongs to the CENP-I/CTF3 family. In terms of assembly, component of the CENPA-CAD complex, composed of CENPI, CENPK, CENPL, CENPO, CENPP, CENPQ, CENPR and CENPS. The CENPA-CAD complex interacts with the CENPA-NAC complex, at least composed of CENPA, CENPC, CENPH, CENPM, CENPN, CENPT and CENPU. Interacts with SENP6. In terms of processing, sumoylated. Sumoylated form can be polyubiquitinated by RNF4, leading to its degradation. Desumoylation by SENP6 prevents its degradation.

It is found in the nucleus. Its subcellular location is the chromosome. The protein resides in the centromere. Its function is as follows. Component of the CENPA-CAD (nucleosome distal) complex, a complex recruited to centromeres which is involved in assembly of kinetochore proteins, mitotic progression and chromosome segregation. May be involved in incorporation of newly synthesized CENPA into centromeres via its interaction with the CENPA-NAC complex. Required for the localization of CENPF, MAD1L1 and MAD2 (MAD2L1 or MAD2L2) to kinetochores. Involved in the response of gonadal tissues to follicle-stimulating hormone. The chain is Centromere protein I (CENPI) from Homo sapiens (Human).